A 2189-amino-acid chain; its full sequence is Chromatin modification-related protein eaf-1 (2189 aa).

Disordered regions lie at residues 183–400 (VQGS…SGAE), 415–438 (VIGKAGVAGPHGAHSTGGLQTQHP), and 477–601 (EVAK…PPGL). Low complexity predominate over residues 234-253 (PTPQTVAPPATAPTSTTKTA). The segment covering 260–277 (AGPKDDTVSRGDAEEKAR) has biased composition (basic and acidic residues). 3 stretches are compositionally biased toward polar residues: residues 281–293 (TITSVNQLLSNGD), 300–312 (TLSSPSSTVQSAP), and 319–333 (ASASTSPDNEASQSF). Residues 336–349 (PVSRPEQELRRATT) show a composition bias toward basic and acidic residues. Low complexity predominate over residues 534-543 (QPQPSSTAPS). Residues 573–583 (ETQARTSQSSH) show a composition bias toward polar residues. Residues 722 to 797 (PVRCLEPARP…PPVRAVDNAD (76 aa)) enclose the HSA domain. The Myb-like domain occupies 985–1045 (FESRIASQWT…ECFERWVNLE (61 aa)). Composition is skewed to low complexity over residues 1320–1330 (VAVQLQQQQHQ) and 1336–1406 (QHPQ…QVTQ). Disordered regions lie at residues 1320–1428 (VAVQ…PMRP), 1622–1644 (MQTQTPAHQPHQPQAQPHVQAQA), 1663–1831 (QKQA…GQVQ), and 1846–2189 (VQGQ…APTK). Composition is skewed to low complexity over residues 1663–1808 (QKQA…QGQG), 1818–1831 (GQGHAQGQVQGQVQ), 1846–1863 (VQGQVQGQAPGQVQPQHA), 1873–2089 (QHAQ…QPQQ), and 2097–2189 (SQPQ…APTK).

It belongs to the EAF1 family. In terms of assembly, component of the NuA4 histone acetyltransferase complex.

The protein resides in the nucleus. Its function is as follows. Component of the NuA4 histone acetyltransferase complex which is involved in transcriptional activation of selected genes principally by acetylation of nucleosomal histone H4 and H2A. The NuA4 complex is also involved in DNA repair. The polypeptide is Chromatin modification-related protein eaf-1 (eaf-1) (Neurospora crassa (strain ATCC 24698 / 74-OR23-1A / CBS 708.71 / DSM 1257 / FGSC 987)).